A 531-amino-acid polypeptide reads, in one-letter code: T-complex protein 1 subunit zeta-2 (531 aa).

This sequence belongs to the TCP-1 chaperonin family. Component of the chaperonin-containing T-complex (TRiC), a heterooligomeric complex of about 850 to 900 kDa that forms two stacked rings, 12 to 16 nm in diameter. As to expression, testis specific.

It localises to the cytoplasm. In terms of biological role, component of the chaperonin-containing T-complex (TRiC), a molecular chaperone complex that assists the folding of proteins upon ATP hydrolysis. This chain is T-complex protein 1 subunit zeta-2 (Cct6b), found in Mus musculus (Mouse).